We begin with the raw amino-acid sequence, 348 residues long: Methylthioribose-1-phosphate isomerase (348 aa).

Residues 54-56 (RGA), Arg96, and Gln199 contribute to the substrate site. The active-site Proton donor is Asp240. 250–251 (NK) lines the substrate pocket.

It belongs to the eIF-2B alpha/beta/delta subunits family. MtnA subfamily.

It catalyses the reaction 5-(methylsulfanyl)-alpha-D-ribose 1-phosphate = 5-(methylsulfanyl)-D-ribulose 1-phosphate. It participates in amino-acid biosynthesis; L-methionine biosynthesis via salvage pathway; L-methionine from S-methyl-5-thio-alpha-D-ribose 1-phosphate: step 1/6. Its function is as follows. Catalyzes the interconversion of methylthioribose-1-phosphate (MTR-1-P) into methylthioribulose-1-phosphate (MTRu-1-P). In Thioalkalivibrio sulfidiphilus (strain HL-EbGR7), this protein is Methylthioribose-1-phosphate isomerase.